A 276-amino-acid chain; its full sequence is Large ribosomal subunit protein uL2 (276 aa).

A disordered region spans residues Met225–Lys276. Residues Lys258–Lys276 show a composition bias toward basic residues.

This sequence belongs to the universal ribosomal protein uL2 family. In terms of assembly, part of the 50S ribosomal subunit. Forms a bridge to the 30S subunit in the 70S ribosome.

Its function is as follows. One of the primary rRNA binding proteins. Required for association of the 30S and 50S subunits to form the 70S ribosome, for tRNA binding and peptide bond formation. It has been suggested to have peptidyltransferase activity; this is somewhat controversial. Makes several contacts with the 16S rRNA in the 70S ribosome. In Moorella thermoacetica (strain ATCC 39073 / JCM 9320), this protein is Large ribosomal subunit protein uL2.